A 146-amino-acid polypeptide reads, in one-letter code: Hemoglobin subunit beta (146 aa).

Position 1 is an N-acetylvaline (V1). Residues 2–146 (HLTADEKAAV…VANALAHKYH (145 aa)) enclose the Globin domain. The residue at position 12 (T12) is a Phosphothreonine. Residue S44 is modified to Phosphoserine. K59 is modified (N6-acetyllysine). Heme b is bound at residue H63. K82 is subject to N6-acetyllysine. A heme b-binding site is contributed by H92. C93 carries the post-translational modification S-nitrosocysteine. At K144 the chain carries N6-acetyllysine.

The protein belongs to the globin family. In terms of assembly, heterotetramer of two alpha chains and two beta chains. As to expression, red blood cells.

In terms of biological role, involved in oxygen transport from the lung to the various peripheral tissues. This chain is Hemoglobin subunit beta (HBB), found in Odobenus rosmarus divergens (Pacific walrus).